A 319-amino-acid chain; its full sequence is L-lactate dehydrogenase (319 aa).

NAD(+) contacts are provided by residues 10–11 (RV), aspartate 32, arginine 37, tyrosine 62, and 76–77 (GV). Substrate is bound by residues glutamine 79, arginine 85, and 117–120 (NPVD). Residues 115–117 (VTN) and serine 140 each bind NAD(+). Residue 145–148 (DTAR) participates in substrate binding. Residues arginine 150 and histidine 165 each contribute to the beta-D-fructose 1,6-bisphosphate site. Histidine 172 acts as the Proton acceptor in catalysis. Position 217 is a phosphotyrosine (tyrosine 217). Threonine 226 is a binding site for substrate.

It belongs to the LDH/MDH superfamily. LDH family. Homotetramer.

The protein resides in the cytoplasm. The enzyme catalyses (S)-lactate + NAD(+) = pyruvate + NADH + H(+). The protein operates within fermentation; pyruvate fermentation to lactate; (S)-lactate from pyruvate: step 1/1. Allosterically activated by fructose 1,6-bisphosphate (FBP). Inactivated by Mn(2+), Co(2+), Cd(2+) and Zn(2+). Catalyzes the conversion of lactate to pyruvate. It is stereospecific for L(+)-lactate. This Thermotoga maritima (strain ATCC 43589 / DSM 3109 / JCM 10099 / NBRC 100826 / MSB8) protein is L-lactate dehydrogenase.